A 170-amino-acid chain; its full sequence is MIIKGRAHKFGDDVDTDAIIPGPYLRTTDPYELASHCMAGIDENFPKKVKEGDVIVAGENFGCGSSREQAVIAIKYCGIKAVIAKSFARIFYRNAINVGLIPIIANTDEIKDGDIVEIDLDKEEIVITNKNKTIKCETPKGLEREILAAGGLVNYLKKRKLIQSKKGVKT.

Positions tyrosine 24–threonine 27 match the YLRT motif.

The protein belongs to the LeuD family. LeuD type 2 subfamily. As to quaternary structure, heterotetramer of 2 HacA and 2 HacB proteins. Cannot form a complex with LeuC.

It carries out the reaction (2R)-homocitrate = (2R,3S)-homoisocitrate. The catalysed reaction is (2R)-homocitrate = cis-homoaconitate + H2O. It catalyses the reaction (2R,3S)-homoisocitrate = cis-homoaconitate + H2O. The enzyme catalyses cis-(homo)2aconitate + H2O = (2R,3S)-iso(homo)2citrate. It carries out the reaction cis-(homo)3aconitate + H2O = (2R,3S)-iso(homo)3citrate. The catalysed reaction is (R)-malate = maleate + H2O. It catalyses the reaction cis-aconitate + H2O = D-threo-isocitrate. Its pathway is organic acid metabolism; 2-oxosuberate biosynthesis. Functionally, component of a hydro-lyase with broad substrate specificity for cis-unsaturated tricarboxylic acids. Catalyzes both the reversible dehydration of (R)-homocitrate ((R)-2-hydroxybutane-1,2,4-tricarboxylate) to produce cis-homoaconitate ((Z)-but-1-ene-1,2,4-tricarboxylate), and its hydration to homoisocitrate ((1R,2S)-1-hydroxybutane-1,2,4-tricarboxylate). Is also able to hydrate the analogous longer chain substrates cis-homo(2)-aconitate, cis-homo(3)-aconitate, and even the non-physiological cis-homo(4)-aconitate with similar efficiency. These reactions are part of the biosynthesis pathway of coenzyme B. Can also catalyze the hydration of maleate to (R)-malate, and that of cis-aconitate. Cannot catalyze the hydration of citraconate and the dehydration of (S)-homocitrate, citramalate, 2-isopropylmalate, 3-isopropylmalate, citrate or threo-DL-isocitrate. In Methanocaldococcus jannaschii (strain ATCC 43067 / DSM 2661 / JAL-1 / JCM 10045 / NBRC 100440) (Methanococcus jannaschii), this protein is Methanogen homoaconitase small subunit (hacB).